The following is a 431-amino-acid chain: Adenylosuccinate synthetase (431 aa).

Residues 12 to 18 (GDEGKGK) and 40 to 42 (GHT) contribute to the GTP site. Aspartate 13 functions as the Proton acceptor in the catalytic mechanism. 2 residues coordinate Mg(2+): aspartate 13 and glycine 40. IMP-binding positions include 13 to 16 (DEGK), 38 to 41 (NAGH), threonine 129, arginine 143, glutamine 224, threonine 239, and arginine 303. The active-site Proton donor is the histidine 41. 299–305 (VTTGRAR) provides a ligand contact to substrate. GTP contacts are provided by residues arginine 305, 331–333 (KLD), and 413–415 (GVG).

This sequence belongs to the adenylosuccinate synthetase family. As to quaternary structure, homodimer. Requires Mg(2+) as cofactor.

It is found in the cytoplasm. It catalyses the reaction IMP + L-aspartate + GTP = N(6)-(1,2-dicarboxyethyl)-AMP + GDP + phosphate + 2 H(+). The protein operates within purine metabolism; AMP biosynthesis via de novo pathway; AMP from IMP: step 1/2. Its function is as follows. Plays an important role in the de novo pathway of purine nucleotide biosynthesis. Catalyzes the first committed step in the biosynthesis of AMP from IMP. The chain is Adenylosuccinate synthetase from Mycolicibacterium vanbaalenii (strain DSM 7251 / JCM 13017 / BCRC 16820 / KCTC 9966 / NRRL B-24157 / PYR-1) (Mycobacterium vanbaalenii).